The chain runs to 345 residues: Phosphoribosylformylglycinamidine cyclo-ligase (345 aa).

It belongs to the AIR synthase family.

The protein localises to the cytoplasm. The enzyme catalyses 2-formamido-N(1)-(5-O-phospho-beta-D-ribosyl)acetamidine + ATP = 5-amino-1-(5-phospho-beta-D-ribosyl)imidazole + ADP + phosphate + H(+). Its pathway is purine metabolism; IMP biosynthesis via de novo pathway; 5-amino-1-(5-phospho-D-ribosyl)imidazole from N(2)-formyl-N(1)-(5-phospho-D-ribosyl)glycinamide: step 2/2. The protein is Phosphoribosylformylglycinamidine cyclo-ligase of Prochlorococcus marinus (strain MIT 9211).